Consider the following 63-residue polypeptide: Glutamine synthetase translation inhibitor (63 aa).

Inhibits the synthesis of glutamine synthetase II. This is Glutamine synthetase translation inhibitor (gstI) from Rhizobium leguminosarum.